The following is a 316-amino-acid chain: N-acetylmuramic acid 6-phosphate etherase (316 aa).

Residues 68 to 231 (ITDRLRSGGR…STCAMVRLGK (164 aa)) form the SIS domain. The active-site Proton donor is the glutamate 96. The active site involves glutamate 127.

Belongs to the GCKR-like family. MurNAc-6-P etherase subfamily. As to quaternary structure, homodimer.

It carries out the reaction N-acetyl-D-muramate 6-phosphate + H2O = N-acetyl-D-glucosamine 6-phosphate + (R)-lactate. It functions in the pathway amino-sugar metabolism; N-acetylmuramate degradation. Specifically catalyzes the cleavage of the D-lactyl ether substituent of MurNAc 6-phosphate, producing GlcNAc 6-phosphate and D-lactate. This chain is N-acetylmuramic acid 6-phosphate etherase, found in Prochlorococcus marinus (strain MIT 9313).